The sequence spans 117 residues: uncharacterized protein (117 aa).

The next 2 membrane-spanning stretches (helical) occupy residues 9–29 (ITSH…FIPF) and 56–76 (VIIV…FFIP).

It localises to the membrane. This is an uncharacterized protein from Saccharomyces cerevisiae (strain ATCC 204508 / S288c) (Baker's yeast).